The sequence spans 56 residues: Serine protease inhibitor Kazal-type 1 (56 aa).

The region spanning 3–56 (PQREATCTSEVSGCPKIYNPVCGTDGITYSNECVLCSENKKRQTPVLIQKSGPC) is the Kazal-like domain. 3 cysteine pairs are disulfide-bonded: Cys-9-Cys-38, Cys-16-Cys-35, and Cys-24-Cys-56.

The protein resides in the secreted. Functionally, serine protease inhibitor which exhibits anti-trypsin activity. In the pancreas, protects against trypsin-catalyzed premature activation of zymogens. In terms of biological role, in the male reproductive tract, binds to sperm heads where it modulates sperm capacitance by inhibiting calcium uptake and nitrogen oxide (NO) production. The chain is Serine protease inhibitor Kazal-type 1 (SPINK1) from Sus scrofa (Pig).